Here is a 776-residue protein sequence, read N- to C-terminus: Isoamylase (776 aa).

The N-terminal stretch at 1 to 26 is a signal peptide; the sequence is MKCPKILAALLGCAVLAGVPAMPAHA. 5 residues coordinate Ca(2+): aspartate 154, glutamate 255, threonine 256, asparagine 258, and aspartate 285. Residue aspartate 401 is the Nucleophile of the active site. Residues cysteine 410 and cysteine 422 are joined by a disulfide bond. Glutamate 461 functions as the Proton donor in the catalytic mechanism. Cystine bridges form between cysteine 546–cysteine 616 and cysteine 738–cysteine 766.

This sequence belongs to the glycosyl hydrolase 13 family. Monomer. The cofactor is Ca(2+).

The enzyme catalyses Hydrolysis of (1-&gt;6)-alpha-D-glucosidic branch linkages in glycogen, amylopectin and their beta-limit dextrins.. The chain is Isoamylase (iam) from Pseudomonas sp. (strain SMP1).